Here is a 501-residue protein sequence, read N- to C-terminus: ADP,ATP carrier protein 3 (501 aa).

12 helical membrane-spanning segments follow: residues 23-43 (LKLFIPMALMMLCILFNFGAL), 59-79 (IISFLKLWLVLPSCVIFTILY), 90-110 (YIFYSIVGTFLLFFLLFAYII), 146-166 (YALMYIFSELWSAVVINLMFW), 183-203 (PVLGMVGNIGLIIAGSVLVFF), 227-247 (IMLQPIISIIVTAGIIAMFLF), 293-313 (IALLIICYGLLINIVEGPWKA), 326-346 (VNFMGMFNIWMGISCVTFMII), 361-381 (LLTPIMLSITGFMFFIFIIFI), 383-403 (EIGTCFGDFNLLYVAIIVGAI), 446-466 (FGKSLGAFIQSLIFIIIPTAT), and 470-490 (IIIYLLVIFIVMMNLWIWNII).

It belongs to the ADP/ATP translocase tlc family.

The protein resides in the cell membrane. Functionally, provides the rickettsial cell with host ATP in exchange for rickettsial ADP. This is an obligate exchange system. This energy acquiring activity is an important component of rickettsial parasitism. The chain is ADP,ATP carrier protein 3 (tlcC) from Rickettsia prowazekii (strain Madrid E).